The chain runs to 193 residues: Large ribosomal subunit protein uL5 (193 aa).

Belongs to the universal ribosomal protein uL5 family. As to quaternary structure, part of the 50S ribosomal subunit; part of the 5S rRNA/L5/L18/L25 subcomplex. Contacts the 5S rRNA and the P site tRNA. Forms a bridge to the 30S subunit in the 70S ribosome.

This is one of the proteins that bind and probably mediate the attachment of the 5S RNA into the large ribosomal subunit, where it forms part of the central protuberance. In the 70S ribosome it contacts protein S13 of the 30S subunit (bridge B1b), connecting the 2 subunits; this bridge is implicated in subunit movement. Contacts the P site tRNA; the 5S rRNA and some of its associated proteins might help stabilize positioning of ribosome-bound tRNAs. The polypeptide is Large ribosomal subunit protein uL5 (Pseudarthrobacter chlorophenolicus (strain ATCC 700700 / DSM 12829 / CIP 107037 / JCM 12360 / KCTC 9906 / NCIMB 13794 / A6) (Arthrobacter chlorophenolicus)).